We begin with the raw amino-acid sequence, 283 residues long: Bifunctional protein FolD (283 aa).

Residues 166–168 (GAS) and I232 contribute to the NADP(+) site.

Belongs to the tetrahydrofolate dehydrogenase/cyclohydrolase family. As to quaternary structure, homodimer.

The enzyme catalyses (6R)-5,10-methylene-5,6,7,8-tetrahydrofolate + NADP(+) = (6R)-5,10-methenyltetrahydrofolate + NADPH. It catalyses the reaction (6R)-5,10-methenyltetrahydrofolate + H2O = (6R)-10-formyltetrahydrofolate + H(+). It functions in the pathway one-carbon metabolism; tetrahydrofolate interconversion. Catalyzes the oxidation of 5,10-methylenetetrahydrofolate to 5,10-methenyltetrahydrofolate and then the hydrolysis of 5,10-methenyltetrahydrofolate to 10-formyltetrahydrofolate. The sequence is that of Bifunctional protein FolD from Hamiltonella defensa subsp. Acyrthosiphon pisum (strain 5AT).